Reading from the N-terminus, the 644-residue chain is uncharacterized protein (644 aa).

The tract at residues 1-35 is disordered; sequence MKANGLDNDPARTGMERTDIDSEHPEAQPLLNNNH. At 1–90 the chain is on the cytoplasmic side; it reads MKANGLDNDP…ILNILILINT (90 aa). Residues 14–26 are compositionally biased toward basic and acidic residues; that stretch reads GMERTDIDSEHPE. Ser22, Ser56, and Ser63 each carry phosphoserine. A helical membrane pass occupies residues 91 to 111; that stretch reads IWLVTTLISDFFFNINILFGF. Residues 112–122 lie on the Vacuolar side of the membrane; sequence SNRYASFNDLT. Residues 123-143 form a helical membrane-spanning segment; that stretch reads LIFISIIANSFNLWFNKLGLY. Residues 144-147 are Cytoplasmic-facing; it reads SALD. Residues 148–168 form a helical membrane-spanning segment; it reads YSLNVTLCVLTLFNLALTYLI. The Vacuolar segment spans residues 169–174; sequence KYTRQR. A helical membrane pass occupies residues 175–195; the sequence is IGFVGTFTYLWTSFSFFIGAI. Residues 196 to 271 are Cytoplasmic-facing; that stretch reads LDWYLLFYNN…EWVSIGFRNT (76 aa). Residues 225-251 form a disordered region; sequence NENHTNSTENRDRSQYGSGSPTPTHRS. Positions 239–251 are enriched in polar residues; that stretch reads QYGSGSPTPTHRS. A Phosphoserine modification is found at Ser244. Residues 272–292 form a helical membrane-spanning segment; that stretch reads IKFLILIFFALFTLNTLLTTL. Residues 293–644 are Vacuolar-facing; sequence DTYRLTHKLP…IGELGKLTED (352 aa). An AB hydrolase-1 domain is found at 348 to 619; sequence PIILFEHGGY…IVEGGHEIYK (272 aa). A disordered region spans residues 469 to 492; it reads GRGDGDDGDDGNGNDGDGRNHDKT.

The protein resides in the vacuole membrane. This is an uncharacterized protein from Saccharomyces cerevisiae (strain ATCC 204508 / S288c) (Baker's yeast).